A 397-amino-acid chain; its full sequence is 2-isopropylmalate synthase 1 (397 aa).

The 263-residue stretch at 6–268 folds into the Pyruvate carboxyltransferase domain; the sequence is VIVFDTTLRD…VHGINTKEIY (263 aa). Mn(2+) contacts are provided by aspartate 15, histidine 203, histidine 205, and asparagine 239.

The protein belongs to the alpha-IPM synthase/homocitrate synthase family. LeuA type 1 subfamily. As to quaternary structure, homodimer. Mn(2+) serves as cofactor.

The protein resides in the cytoplasm. It carries out the reaction 3-methyl-2-oxobutanoate + acetyl-CoA + H2O = (2S)-2-isopropylmalate + CoA + H(+). It functions in the pathway amino-acid biosynthesis; L-leucine biosynthesis; L-leucine from 3-methyl-2-oxobutanoate: step 1/4. In terms of biological role, catalyzes the condensation of the acetyl group of acetyl-CoA with 3-methyl-2-oxobutanoate (2-ketoisovalerate) to form 3-carboxy-3-hydroxy-4-methylpentanoate (2-isopropylmalate). This Caldanaerobacter subterraneus subsp. tengcongensis (strain DSM 15242 / JCM 11007 / NBRC 100824 / MB4) (Thermoanaerobacter tengcongensis) protein is 2-isopropylmalate synthase 1.